The sequence spans 267 residues: MSIDESSDNPTPRPKLGRPPKSEADKRAEKEAQKDGKKPALSTRQRRILEVIRDSTIIRGYPPSIREIADAVGLHSTSSVSYHLTQLEKRGYLRRDGKRPRAVDVRAFDGGQLTNESTKKNAGSPQPTSAAIPEPTTEGETMPEATYVPVVGQIAAGAPILAEQNVEAHFPLPQELVGNGELFLLQVVGESMHDAGIFNGDWVVVRSQSVAEFGDFVAAMIDGEATVKEFQKDADGLWLIPHNPLFEPIPAEEATILGKVAAVLRKI.

The disordered stretch occupies residues 1–44 (MSIDESSDNPTPRPKLGRPPKSEADKRAEKEAQKDGKKPALSTR). Residues 20-38 (PKSEADKRAEKEAQKDGKK) are compositionally biased toward basic and acidic residues. Positions 65–85 (IREIADAVGLHSTSSVSYHLT) form a DNA-binding region, H-T-H motif. Residues 111-140 (GQLTNESTKKNAGSPQPTSAAIPEPTTEGE) form a disordered region. A compositionally biased stretch (polar residues) spans 112–129 (QLTNESTKKNAGSPQPTS). Residues S191 and K228 each act as for autocatalytic cleavage activity in the active site.

Belongs to the peptidase S24 family. In terms of assembly, homodimer.

It carries out the reaction Hydrolysis of Ala-|-Gly bond in repressor LexA.. In terms of biological role, represses a number of genes involved in the response to DNA damage (SOS response), including recA and lexA. In the presence of single-stranded DNA, RecA interacts with LexA causing an autocatalytic cleavage which disrupts the DNA-binding part of LexA, leading to derepression of the SOS regulon and eventually DNA repair. The polypeptide is LexA repressor (Corynebacterium jeikeium (strain K411)).